The sequence spans 245 residues: MRVIKVGGSVVPMLDKILDTSSLHGNSIIVHGGSRYVDEMARKLGVKVERLVSPSGVMFRRTTRRVLDVYVAALMRANRELVSFLRERGIDAIGVSGLDGVVLAKRKKLVKAVVNGKVIAIRDDYSGVIKSINVTLLKNYLKVGIPVIASIAYDPEENVPLNVDGDKVAYHVAIAMKAKELRFLSDTAFLIDGNVVERIPLEDFDEYLRYAGGGMKKKLMMARKALESGVKKVVIEGLNGRTVIS.

Positions 60 and 162 each coordinate substrate.

The protein belongs to the acetylglutamate kinase family. LysZ subfamily.

The protein localises to the cytoplasm. It carries out the reaction [amino-group carrier protein]-C-terminal-N-(1,4-dicarboxybutan-1-yl)-L-glutamine + ATP = [amino-group carrier protein]-C-terminal-N-(1-carboxy-5-phosphooxy-5-oxopentan-1-yl)-L-glutamine + ADP. It catalyses the reaction [amino-group carrier protein]-C-terminal-gamma-(L-glutamyl)-L-glutamate + ATP = [amino-group carrier protein]-C-terminal-gamma-(5-phospho-L-glutamyl)-L-glutamate + ADP. It functions in the pathway amino-acid biosynthesis; L-lysine biosynthesis via AAA pathway; L-lysine from L-alpha-aminoadipate (Thermus route): step 2/5. The protein operates within amino-acid biosynthesis; L-arginine biosynthesis. In terms of biological role, involved in both the arginine and lysine biosynthetic pathways. Phosphorylates the LysW-bound precursors glutamate (for arginine biosynthesis), respectively alpha-aminoadipate (for lysine biosynthesis). The chain is Putative [LysW]-aminoadipate/[LysW]-glutamate kinase from Pyrococcus abyssi (strain GE5 / Orsay).